We begin with the raw amino-acid sequence, 378 residues long: Cln5-like protein 1 (378 aa).

An N-terminal signal peptide occupies residues M1–G20. N-linked (GlcNAc...) asparagine glycosylation is found at N63, N93, N135, N181, N220, N226, N254, and N280. The helical transmembrane segment at W308–I328 threads the bilayer.

It belongs to the CLN5 family.

The protein resides in the membrane. This is Cln5-like protein 1 (cln5la) from Dictyostelium discoideum (Social amoeba).